The primary structure comprises 346 residues: Annexin A1 (346 aa).

Position 2 is an N-acetylalanine (Ala-2). Residue Ser-5 is modified to Phosphoserine; by TRPM7. Residue Gln-19 forms an Isoglutamyl lysine isopeptide (Gln-Lys) (interchain with K-?) linkage. Phosphotyrosine; by EGFR is present on Tyr-21. A Phosphoserine; by PKC modification is found at Ser-27. Residues Ser-34 and Ser-37 each carry the phosphoserine modification. 4 Annexin repeats span residues Phe-42–Lys-113, Thr-114–Lys-185, Asp-197–Lys-269, and Ser-273–Gly-344. An N6-acetyllysine modification is found at Lys-58. Ca(2+) is bound by residues Gly-59, Val-60, Glu-62, Lys-97, Leu-100, Glu-105, Met-127, Gly-129, Gly-131, Thr-132, and Glu-134. Thr-136 carries the post-translational modification Phosphothreonine. Ca(2+) is bound by residues Asp-171, Gly-210, and Arg-213. Residue Lys-214 forms a Glycyl lysine isopeptide (Lys-Gly) (interchain with G-Cter in SUMO1); alternate linkage. A Glycyl lysine isopeptide (Lys-Gly) (interchain with G-Cter in SUMO2); alternate cross-link involves residue Lys-214. Ca(2+) is bound by residues Gly-215, Asp-253, Glu-255, and Leu-256. Residue Lys-257 forms a Glycyl lysine isopeptide (Lys-Gly) (interchain with G-Cter in SUMO1) linkage. Ca(2+) is bound by residues Glu-261, Met-286, Gly-288, and Gly-290. An N6-acetyllysine modification is found at Lys-312. Cysteines 324 and 343 form a disulfide. 3 residues coordinate Ca(2+): Leu-328, Glu-330, and Thr-331. A Glycyl lysine isopeptide (Lys-Gly) (interchain with G-Cter in SUMO1) cross-link involves residue Lys-332. Ca(2+) is bound at residue Glu-336.

It belongs to the annexin family. In terms of assembly, homodimer; non-covalently linked. Homodimer; linked by transglutamylation. Homodimers linked by transglutamylation are observed in placenta, but not in other tissues. Interacts with S100A11. Heterotetramer, formed by two molecules each of S100A11 and ANXA1. Interacts with DYSF. Interacts with EGFR. Post-translationally, phosphorylated by protein kinase C, EGFR and TRPM7. Phosphorylated in response to EGF treatment. Sumoylated. In terms of processing, proteolytically cleaved by cathepsin CTSG to release the active N-terminal peptide Ac2-26. As to expression, detected in eosinophils. Detected in lung, placenta, spleen and thymus (at protein level).

It localises to the nucleus. The protein resides in the cytoplasm. Its subcellular location is the cell projection. It is found in the cilium. The protein localises to the basolateral cell membrane. It localises to the lateral cell membrane. The protein resides in the cell membrane. Its subcellular location is the apical cell membrane. It is found in the membrane. The protein localises to the endosome membrane. It localises to the secreted. The protein resides in the extracellular space. Its subcellular location is the early endosome. It is found in the cytoplasmic vesicle membrane. The protein localises to the extracellular exosome. It localises to the cytoplasmic vesicle. The protein resides in the secretory vesicle lumen. Its subcellular location is the phagocytic cup. Functionally, plays important roles in the innate immune response as effector of glucocorticoid-mediated responses and regulator of the inflammatory process. Has anti-inflammatory activity. Plays a role in glucocorticoid-mediated down-regulation of the early phase of the inflammatory response. Contributes to the adaptive immune response by enhancing signaling cascades that are triggered by T-cell activation, regulates differentiation and proliferation of activated T-cells. Promotes the differentiation of T-cells into Th1 cells and negatively regulates differentiation into Th2 cells. Has no effect on unstimulated T-cells. Negatively regulates hormone exocytosis via activation of the formyl peptide receptors and reorganization of the actin cytoskeleton. Has high affinity for Ca(2+) and can bind up to eight Ca(2+) ions. Displays Ca(2+)-dependent binding to phospholipid membranes. Plays a role in the formation of phagocytic cups and phagosomes. Plays a role in phagocytosis by mediating the Ca(2+)-dependent interaction between phagosomes and the actin cytoskeleton. Its function is as follows. Functions at least in part by activating the formyl peptide receptors and downstream signaling cascades. Promotes chemotaxis of granulocytes and monocytes via activation of the formyl peptide receptors. Promotes rearrangement of the actin cytoskeleton, cell polarization and cell migration. Promotes resolution of inflammation and wound healing. Acts via neutrophil N-formyl peptide receptors to enhance the release of CXCL2. This is Annexin A1 (Anxa1) from Rattus norvegicus (Rat).